We begin with the raw amino-acid sequence, 261 residues long: Undecaprenyl-diphosphatase (261 aa).

8 consecutive transmembrane segments (helical) span residues 1 to 21, 40 to 60, 79 to 99, 106 to 126, 140 to 160, 185 to 205, 210 to 230, and 239 to 259; these read MTVLQAIVLGLVQGVGEFLPI, GLTFDVALHLGTLIAVVAYFW, GRLFWYLIVASIPGAIFGVLF, IFRSPLLIALTLTLMGLGLWW, VNLFDGIIVGISQALAIIPGV, FLMSVPIIAGAALLKLKELPL, LAFIAGVLTAAVVGFLAIKFL, and YLLFTGYRILLAALIVAVFWL.

It belongs to the UppP family.

It localises to the cell membrane. The catalysed reaction is di-trans,octa-cis-undecaprenyl diphosphate + H2O = di-trans,octa-cis-undecaprenyl phosphate + phosphate + H(+). Catalyzes the dephosphorylation of undecaprenyl diphosphate (UPP). Confers resistance to bacitracin. This Moorella thermoacetica (strain ATCC 39073 / JCM 9320) protein is Undecaprenyl-diphosphatase.